The primary structure comprises 379 residues: Stimulator of interferon genes protein (379 aa).

3 helical membrane passes run 20–40 (VAAF…GEPS), 87–107 (ACLG…YFYV), and 115–135 (LPLT…ILLG). Residues Cys88 and Cys91 are each lipidated (S-palmitoyl cysteine). A cyclic dinucleotide-binding domain (CBD) region spans residues 153 to 340 (FNVAHGLAWS…KHLRQEEREE (188 aa)). 2',3'-cGAMP is bound by residues Ser162, Tyr167, Arg238, and Thr263. 3',3'-c-di-GMP contacts are provided by residues Ser162, Tyr167, 238-241 (RVYT), and Thr263. 2',3'-cUAMP-binding residues include Tyr167, Arg238, and Thr263. The tract at residues 340–379 (EVTMGTAGTFVAPGSSTLHQEPELLISGMDQPLPLRTDIF) is C-terminal tail (CTT). Ser355 is subject to Phosphoserine. Position 356 is a phosphothreonine (Thr356). The pLxIS motif motif lies at 363 to 366 (LLIS). Ser366 carries the phosphoserine; by TBK1 modification.

This sequence belongs to the STING family. Homodimer; forms a homodimer in absence of cyclic nucleotide (c-di-GMP or cGAMP). Homotetramer; in presence of cyclic nucleotide (c-di-GMP or cGAMP), forms tetramers and higher-order oligomers through side-by-side packing. Interacts (when phosphorylated) with IRF3; following activation and phosphorylation on the pLxIS motif by TBK1, recruits IRF3. Interacts with TBK1; when homodimer, leading to subsequent production of IFN-beta. Interacts (via transmembrane domain) with TMEM203. In terms of processing, phosphorylation by TBK1 leads to activation and production of IFN-beta. Following cyclic nucleotide (c-di-GMP or cGAMP)-binding, activation and translocation from the endoplasmic reticulum, STING1 is phosphorylated by TBK1 at Ser-366 in the pLxIS motif. The phosphorylated pLxIS motif constitutes an IRF3-binding motif, leading to recruitment of the transcription factor IRF3 to induce type-I interferons and other cytokines. In contrast, lacks phosphorylation site at position 358, leading to reduced production of type-I interferons and other cytokines.

It is found in the endoplasmic reticulum membrane. The protein localises to the cytoplasm. The protein resides in the perinuclear region. Its subcellular location is the endoplasmic reticulum-Golgi intermediate compartment membrane. It localises to the golgi apparatus membrane. It is found in the cytoplasmic vesicle. The protein localises to the autophagosome membrane. The protein resides in the mitochondrion outer membrane. Its subcellular location is the cell membrane. It catalyses the reaction H(+)(in) = H(+)(out). Facilitator of innate immune signaling that acts as a sensor of cytosolic DNA from bacteria and viruses and promotes low production of type I interferon (IFN-alpha and IFN-beta). Compared to other mammals, STING1-dependent type I interferon induction is strongly reduced in bats, suggesting that the cGAS-STING pathway promotes a limited inflammatory response. Innate immune response is triggered in response to non-CpG double-stranded DNA from viruses and bacteria delivered to the cytoplasm. Acts by binding cyclic dinucleotides: recognizes and binds cyclic di-GMP (c-di-GMP), a second messenger produced by bacteria, cyclic UMP-AMP (2',3'-cUAMP), and cyclic GMP-AMP (cGAMP), a messenger produced by CGAS in response to DNA virus in the cytosol. Upon binding to c-di-GMP, cUAMP or cGAMP, STING1 oligomerizes, translocates from the endoplasmic reticulum and is phosphorylated by TBK1 on the pLxIS motif, leading to recruitment and subsequent activation of the transcription factor IRF3 to induce expression of type I interferon and exert a potent anti-viral state. In addition to promote the production of type I interferons, plays a direct role in autophagy. Following cGAMP-binding, STING1 buds from the endoplasmic reticulum into COPII vesicles, which then form the endoplasmic reticulum-Golgi intermediate compartment (ERGIC). The ERGIC serves as the membrane source for WIPI2 recruitment and LC3 lipidation, leading to formation of autophagosomes that target cytosolic DNA or DNA viruses for degradation by the lysosome. Promotes autophagy by acting as a proton channel that directs proton efflux from the Golgi to facilitate MAP1LC3B/LC3B lipidation. The autophagy- and interferon-inducing activities can be uncoupled and autophagy induction is independent of TBK1 phosphorylation. The chain is Stimulator of interferon genes protein from Eidolon helvum (Straw-colored fruit bat).